The sequence spans 124 residues: Ribonuclease pancreatic (124 aa).

Basic and acidic residues predominate over residues 1 to 13 (KESAAAKFERQHM). The tract at residues 1–24 (KESAAAKFERQHMDPSTSSASSSN) is disordered. Positions 7 and 10 each coordinate substrate. H12 serves as the catalytic Proton acceptor. Disulfide bonds link C26–C84, C40–C95, C58–C110, and C65–C72. Substrate is bound by residues 41-45 (KPVNT), K66, and R85. Residue H119 is the Proton donor of the active site.

Belongs to the pancreatic ribonuclease family. As to quaternary structure, monomer. Interacts with and forms tight 1:1 complexes with RNH1. Dimerization of two such complexes may occur. Interaction with RNH1 inhibits this protein. As to expression, pancreas.

It is found in the secreted. The enzyme catalyses an [RNA] containing cytidine + H2O = an [RNA]-3'-cytidine-3'-phosphate + a 5'-hydroxy-ribonucleotide-3'-[RNA].. The catalysed reaction is an [RNA] containing uridine + H2O = an [RNA]-3'-uridine-3'-phosphate + a 5'-hydroxy-ribonucleotide-3'-[RNA].. Functionally, endonuclease that catalyzes the cleavage of RNA on the 3' side of pyrimidine nucleotides. Acts on single-stranded and double-stranded RNA. The polypeptide is Ribonuclease pancreatic (RNASE1) (Cervus elaphus (Red deer)).